Consider the following 220-residue polypeptide: Pyrrolidone-carboxylate peptidase 1 (220 aa).

Residues glutamate 80, cysteine 143, and histidine 172 contribute to the active site.

This sequence belongs to the peptidase C15 family. Homotetramer.

It localises to the cytoplasm. The catalysed reaction is Release of an N-terminal pyroglutamyl group from a polypeptide, the second amino acid generally not being Pro.. Removes 5-oxoproline from various penultimate amino acid residues except L-proline. This chain is Pyrrolidone-carboxylate peptidase 1, found in Photorhabdus laumondii subsp. laumondii (strain DSM 15139 / CIP 105565 / TT01) (Photorhabdus luminescens subsp. laumondii).